Here is a 151-residue protein sequence, read N- to C-terminus: MKYQQLENLESGWKWKYLVKKHREGELITRYVEASAAKEAVDLLLGMENEPVRVLGWIDQHMNPALQNRLKQTIRARRKRHFNAEHQHTRKKSIDLEFMVWQRLAGLAQRRGITLSETIVQLIEDAERKEKYENHMSTLKQDLQALLGKKE.

It belongs to the MatP family. As to quaternary structure, homodimer.

It is found in the cytoplasm. Functionally, required for spatial organization of the terminus region of the chromosome (Ter macrodomain) during the cell cycle. Prevents early segregation of duplicated Ter macrodomains during cell division. Binds specifically to matS, which is a 13 bp signature motif repeated within the Ter macrodomain. In Cronobacter sakazakii (strain ATCC BAA-894) (Enterobacter sakazakii), this protein is Macrodomain Ter protein.